The primary structure comprises 431 residues: 5-methylthioadenosine/S-adenosylhomocysteine deaminase (431 aa).

2 residues coordinate Zn(2+): H60 and H62. 2 residues coordinate substrate: E89 and H182. H209 provides a ligand contact to Zn(2+). Residues E212 and D297 each coordinate substrate. A Zn(2+)-binding site is contributed by D297.

It belongs to the metallo-dependent hydrolases superfamily. MTA/SAH deaminase family. The cofactor is Zn(2+).

It carries out the reaction S-adenosyl-L-homocysteine + H2O + H(+) = S-inosyl-L-homocysteine + NH4(+). It catalyses the reaction S-methyl-5'-thioadenosine + H2O + H(+) = S-methyl-5'-thioinosine + NH4(+). Catalyzes the deamination of 5-methylthioadenosine and S-adenosyl-L-homocysteine into 5-methylthioinosine and S-inosyl-L-homocysteine, respectively. Is also able to deaminate adenosine. This chain is 5-methylthioadenosine/S-adenosylhomocysteine deaminase, found in Natronomonas pharaonis (strain ATCC 35678 / DSM 2160 / CIP 103997 / JCM 8858 / NBRC 14720 / NCIMB 2260 / Gabara) (Halobacterium pharaonis).